Here is a 494-residue protein sequence, read N- to C-terminus: E3 ubiquitin-protein ligase ari-1.1 (494 aa).

Residues Met-1–Ile-30 show a composition bias toward acidic residues. The interval Met-1 to Val-52 is disordered. Residues Glu-33 to Val-52 are compositionally biased toward basic and acidic residues. A TRIAD supradomain region spans residues Gly-124–Asp-331. Cys-128, Cys-131, Cys-142, His-144, Cys-147, Cys-150, Cys-169, Cys-174, Cys-214, Cys-219, Cys-235, Cys-237, Cys-242, Cys-245, His-250, Cys-255, Cys-282, and Cys-285 together coordinate Zn(2+). An RING-type 1 zinc finger spans residues Cys-128–Cys-174. The IBR-type zinc-finger motif lies at Ala-194–Cys-255. Residues Cys-282 to Cys-313 form an RING-type 2; atypical zinc finger. Cys-295 is a catalytic residue. Zn(2+) is bound by residues Cys-300, Cys-305, Cys-310, Cys-313, His-320, and Cys-327. The interval Arg-346–Glu-494 is ariadne domain.

Belongs to the RBR family. Ariadne subfamily. As to quaternary structure, interacts with ubiquitin-conjugating enzyme E2 ubc-18.

The protein localises to the nucleus. It is found in the cytoplasm. It catalyses the reaction [E2 ubiquitin-conjugating enzyme]-S-ubiquitinyl-L-cysteine + [acceptor protein]-L-lysine = [E2 ubiquitin-conjugating enzyme]-L-cysteine + [acceptor protein]-N(6)-ubiquitinyl-L-lysine.. With respect to regulation, autoinhibited by the ariadne domain, which masks the second RING-type zinc finger that contains the active site and inhibits the E3 activity. In terms of biological role, E3 ubiquitin-protein transferase, which catalyzes ubiquitination of target proteins together with ubiquitin-conjugating enzyme E2 ubc-18. Acts with ubc-18 to regulate pharyngeal development. This chain is E3 ubiquitin-protein ligase ari-1.1, found in Caenorhabditis elegans.